The following is a 150-amino-acid chain: Aspartate 1-decarboxylase (150 aa).

The active-site Schiff-base intermediate with substrate; via pyruvic acid is S25. The residue at position 25 (S25) is a Pyruvic acid (Ser). Residue T57 coordinates substrate. The active-site Proton donor is Y58. 73-75 (GAA) contacts substrate.

It belongs to the PanD family. Heterooctamer of four alpha and four beta subunits. The cofactor is pyruvate. In terms of processing, is synthesized initially as an inactive proenzyme, which is activated by self-cleavage at a specific serine bond to produce a beta-subunit with a hydroxyl group at its C-terminus and an alpha-subunit with a pyruvoyl group at its N-terminus.

It is found in the cytoplasm. The catalysed reaction is L-aspartate + H(+) = beta-alanine + CO2. It participates in cofactor biosynthesis; (R)-pantothenate biosynthesis; beta-alanine from L-aspartate: step 1/1. Functionally, catalyzes the pyruvoyl-dependent decarboxylation of aspartate to produce beta-alanine. The sequence is that of Aspartate 1-decarboxylase from Kocuria rhizophila (strain ATCC 9341 / DSM 348 / NBRC 103217 / DC2201).